The chain runs to 212 residues: High frequency lysogenization protein HflD homolog (212 aa).

It belongs to the HflD family.

It is found in the cytoplasm. It localises to the cell inner membrane. The sequence is that of High frequency lysogenization protein HflD homolog from Pectobacterium carotovorum subsp. carotovorum (strain PC1).